The following is a 365-amino-acid chain: Putrescine 2-hydroxylase (365 aa).

Residues 44-141 (GHELMVPEVG…LQNWNGLLFE (98 aa)) form the Rieske domain. [2Fe-2S] cluster contacts are provided by C81, H83, C100, and H103.

Belongs to the bacterial ring-hydroxylating dioxygenase alpha subunit family. [2Fe-2S] cluster serves as cofactor.

Its function is as follows. Rieske-type iron sulfur protein that can catalyze in vitro the 2-hydroxylation of putrescine, forming 2-hydroxyputrescine. May be involved in the biosynthesis of the cyclic hydroxamate siderophore alcaligin. The polypeptide is Putrescine 2-hydroxylase (Ralstonia nicotianae (strain ATCC BAA-1114 / GMI1000) (Ralstonia solanacearum)).